The following is a 46-amino-acid chain: GIFSKLGRKKIKNLLISGLKNVGKEVGMDVVRTGIDIAGCKIKGEC.

The cysteines at positions 40 and 46 are disulfide-linked.

It belongs to the frog skin active peptide (FSAP) family. Brevinin subfamily. As to expression, expressed by the skin glands.

It is found in the secreted. Its function is as follows. Shows antibacterial activity against representative Gram-negative and Gram-positive bacterial species, and hemolytic activity. In Pelophylax lessonae (Pool frog), this protein is Esculentin-1.